Reading from the N-terminus, the 1202-residue chain is MEDSNSTASNVARAILAVVDFSSTSDTRKSAVQFLDSVKSGDVRVLAKTSFHLVKKEWSSEIRLHAFKMLQHLVRLRWDELSPPECRGLVNLSIELMSEVANASENWPLKSQSAALVAEIVRREGPDRWQEIFTLLTSLSAQGPLQAELVLMTLRWLPEDITIYNDDLEGDRRRLLLRGLTQSLPEILPLLYNLLERHFGAAMSEAGMQHFDLAKQHADVVIACLNAIVAYTEWAPVPDLARYGILSGCSFLLSSSDFRLHACEVFKLVCSRKRPSDASTAEFDSAISNLFQILTNASREFLCRSSSSSSVIDDNDYDFAVCMCESMASLGSTNLQSISSDGGVMAVYLQQMLGFFQHFKLGLHFEALLFWLSLMRDLLPKPKAATYPSGGGSSTGGDDSSSQVDSEKKKTLSLINDDISSAILDVSFQRMLKKEKVPTGIALSLGPLELWSDEFEGKGDFGPYRSKLLELIKLTASHKPLISSTKISERVITLIKHLLASPAPLQHVAVMDSQQLALDCIVATLFDGSNEFAGGSSEVHYALRGIFEGLLQQLLSLKWNEPELMKVHVHYLDAMGPFLKYFPDAVGSLINKLFELLTSLPHVVKDPATSTSRAARLQICTSFIRIAKAAEKSVLPHMKGIADTMGYLAKEGTLLRGEHNILGEAFLVMASSAGAQQQQEVLAWLLEPLSQQWIQPEWQNNYLSDPMGLVRLCSNTSFMWSIYHTVTFFEKALKRSGYRKSNLNTTSATTPASHPMAHHLSWMLPPLLKLLRVLHSLWSPSVFQTLPPEMRAAMTMTDAERYSLLGEANPKLSKGVSVYADGSFEGTKEGQAEASESDIRNWLKGIRDCGYNVLGLSTTIGETFFKCLDANYVAMALMENLQSMEFRHIRLFIHTFITYIVKSCPADMWESWLGVLLHPLFIHCQQALSSAWPGLLQEGRAKVPDLFGIQSGSDMKLEVMEEKLLRDLTREIATLFSTMASPGLNTGVPVLEHSGHVGRVDMSTLTDLHAFRSNSMVGFLLNHKSVALPALQICLETFTWTDGEATTKVCYFCGVVVLLAKLTNNVELREFVSKDMFSAVIRGLGMESNAINSPDLVNICREIFIYLSDRDPAPRQVLLSLPCLTPNDLHAFEEATAKTSSPKEQKQLMRSLLLLGTGNNLKALAAQKSQNVITNVTARTRLPASAPETIGAGVLWDEEFVQ.

Met-1 is subject to N-acetylmethionine.

It belongs to the exportin family. Interacts with RAN1. In terms of tissue distribution, expressed in roots, leaves and floral buds.

It localises to the nucleus. Nucleocytoplasmic transporter involved in the nuclear export of microRNAs (miRNAs). Required for several miRNAs accumulation. Specifically required for miR156 accumulation which targets SPL3, SPL4 and SPL5 transcription factors. Involved in plant development through its role in miRNAs processing. Required for vegetative phase change and vegetative to reproductive phase transition. Functionally dependent on RAN1 binding. Does not seem to be involved in small interfering RNAs (siRNAs) processing. The chain is Protein HASTY 1 (HST1) from Arabidopsis thaliana (Mouse-ear cress).